We begin with the raw amino-acid sequence, 205 residues long: MHQPHDLQILPTPVIRLIEELSRLPGVGPKTASRLTFFLLRAPDELPRALANALIGLKQQVQLCSRCYFITQNDLCAICANPARDQRIVCVVEEPLDVVAIERTGVYRGLYHVLHGRIAPLEGMNREDIYFDELLDRVRAEPIDEVIIATNPNLEGEATAFHLQRALAPLGARVTRLARGLPTGGDLEWADPGTLGSALEGRREM.

The C4-type zinc-finger motif lies at 64 to 79 (CSRCYFITQNDLCAIC). The Toprim domain maps to 87 to 182 (RIVCVVEEPL…RVTRLARGLP (96 aa)).

Belongs to the RecR family.

In terms of biological role, may play a role in DNA repair. It seems to be involved in an RecBC-independent recombinational process of DNA repair. It may act with RecF and RecO. The chain is Recombination protein RecR from Roseiflexus castenholzii (strain DSM 13941 / HLO8).